The primary structure comprises 339 residues: MSASGLPFDDFRELIRNLPGPDLGAERAVREREVTLTKPAGSLGRLEEIVAWLATWTGKRTPQVNRPLVAVFAGNHGVTAKNITPFPPSVTAQMVENFAAGGAAINQICIANDLGLKVFDLALEHPTGDITEEAAMDERTCAATMAFGMEAIAGGTDLLCIGEMGIGNTTIAAAIALALFGGTAEDWVGPGTGSTGELMQRKLAAVRLAVALHQPHLQDPLEVLRCLGGREIAAMAGAILAARMEKIPVIVDGFVASAAAAVLYAANPEAIDHCMFGQVSAEPGHRKLLAKMGKEPLLDLGMRLGEGTGAALAANIVKAAALCHSGMATFEQAGVSASK.

The Proton acceptor role is filled by glutamate 306.

It belongs to the CobT family.

The catalysed reaction is 5,6-dimethylbenzimidazole + nicotinate beta-D-ribonucleotide = alpha-ribazole 5'-phosphate + nicotinate + H(+). It functions in the pathway nucleoside biosynthesis; alpha-ribazole biosynthesis; alpha-ribazole from 5,6-dimethylbenzimidazole: step 1/2. In terms of biological role, catalyzes the synthesis of alpha-ribazole-5'-phosphate from nicotinate mononucleotide (NAMN) and 5,6-dimethylbenzimidazole (DMB). This is Nicotinate-nucleotide--dimethylbenzimidazole phosphoribosyltransferase from Brucella melitensis biotype 1 (strain ATCC 23456 / CCUG 17765 / NCTC 10094 / 16M).